Here is a 499-residue protein sequence, read N- to C-terminus: Lysine--tRNA ligase (499 aa).

Positions 408 and 415 each coordinate Mg(2+).

The protein belongs to the class-II aminoacyl-tRNA synthetase family. In terms of assembly, homodimer. It depends on Mg(2+) as a cofactor.

The protein localises to the cytoplasm. It carries out the reaction tRNA(Lys) + L-lysine + ATP = L-lysyl-tRNA(Lys) + AMP + diphosphate. The chain is Lysine--tRNA ligase from Bacillus cereus (strain G9842).